The chain runs to 470 residues: UTP--glucose-1-phosphate uridylyltransferase 1 (470 aa).

N-acetylalanine is present on Ala-2. UTP is bound by residues Leu-86–Gly-89, Lys-100, Gln-163, and Gly-192. Position 88–89 (Gly-88–Gly-89) interacts with substrate. Residues His-193 and Asn-221 to Asp-223 contribute to the substrate site. Residues Asp-223 and Lys-361 each contribute to the UTP site.

The protein belongs to the UDPGP type 1 family. In terms of tissue distribution, expressed in roots, rosette leaves, cauline leaves, stems, flowers and siliques.

It is found in the cytoplasm. It catalyses the reaction alpha-D-glucose 1-phosphate + UTP + H(+) = UDP-alpha-D-glucose + diphosphate. In terms of biological role, converts glucose 1-phosphate to UDP-glucose, which is the major glycosyl donor for polysaccharides. Acts redundantly with UGP2 and is essential for the synthesis of sucrose, starch and cell wall, and callose deposition. Involved in the regulation of the programmed cell death (PCD) induced by the fungal toxin fumonisin B1 (FB1). The polypeptide is UTP--glucose-1-phosphate uridylyltransferase 1 (Arabidopsis thaliana (Mouse-ear cress)).